The following is a 187-amino-acid chain: Proline-rich protein 29 (187 aa).

Residues 133–187 form a disordered region; sequence HQPPWQGEPRIQHQPPASRQEEVRDVPPPPPPSATGTVGADVPPASDYYDAESLP.

This Mus musculus (Mouse) protein is Proline-rich protein 29 (Prr29).